Consider the following 172-residue polypeptide: Large ribosomal subunit protein uL10 (172 aa).

It belongs to the universal ribosomal protein uL10 family. As to quaternary structure, part of the ribosomal stalk of the 50S ribosomal subunit. The N-terminus interacts with L11 and the large rRNA to form the base of the stalk. The C-terminus forms an elongated spine to which L12 dimers bind in a sequential fashion forming a multimeric L10(L12)X complex.

Forms part of the ribosomal stalk, playing a central role in the interaction of the ribosome with GTP-bound translation factors. The polypeptide is Large ribosomal subunit protein uL10 (Rhodospirillum rubrum (strain ATCC 11170 / ATH 1.1.1 / DSM 467 / LMG 4362 / NCIMB 8255 / S1)).